Here is a 109-residue protein sequence, read N- to C-terminus: uncharacterized protein (109 aa).

A signal peptide spans Met-1–Ser-23. The N-linked (GlcNAc...) asparagine glycan is linked to Asn-27. Residues Tyr-45 to Asn-109 are disordered. A compositionally biased stretch (low complexity) spans Pro-54–Gln-72. Residues Lys-94–Gln-103 are compositionally biased toward basic and acidic residues.

The protein localises to the secreted. This is an uncharacterized protein from Dictyostelium discoideum (Social amoeba).